Consider the following 111-residue polypeptide: Prostatic steroid-binding protein C1 (111 aa).

The first 23 residues, 1-23 (MSTIKLSLCLLIMLAVCCYEANA), serve as a signal peptide directing secretion.

This sequence belongs to the secretoglobin family. Lipophilin subfamily. In terms of assembly, prostatein is composed of three different peptides called C1, C2 and C3. These form covalent C1:C3 (F) and C2:C3 (S) heterodimers whose noncovalent association forms tetrameric (C1:C3/C3:C2) prostatein molecules.

Its subcellular location is the secreted. Functionally, part of prostatein which is the major secretory glycoprotein of ventral prostate gland. The chain is Prostatic steroid-binding protein C1 (Psbpc1) from Rattus norvegicus (Rat).